We begin with the raw amino-acid sequence, 383 residues long: Adaptive-response sensory kinase SasA (383 aa).

The Histidine kinase domain maps to 152–365 (MVAHELRTPL…CFTFTVPIWQ (214 aa)). The residue at position 155 (His155) is a Phosphohistidine; by autocatalysis.

As to quaternary structure, homooligomerizes. Interacts with KaiC. Participates in the KaiABC clock complex, whose core is composed of a KaiC homohexamer, 6 KaiB and up to 6 KaiA dimers. SasA and KaiB(fs) compete to bind to KaiC.

It catalyses the reaction ATP + protein L-histidine = ADP + protein N-phospho-L-histidine.. Member of the two-component regulatory system SasA/RpaA involved in genome-wide circadian gene expression. One of several clock output pathways. Participates in the Kai clock protein complex, the main circadian regulator in cyanobacteria, via its interaction with KaiC. KaiC enhances the autophosphorylation activity of SasA, which then transfers its phosphate group to RpaA to activate it. In addition to its output function, recruits fold-shifted KaiB (KaiB(fs)) to KaiC to cooperatively form the KaiB(6):KaiC(6) complex (independent of SasA kinase activity). Required for robustness of the circadian rhythm of gene expression and is involved in clock output, also required for adaptation to light/dark cycles. The polypeptide is Adaptive-response sensory kinase SasA (Synechococcus sp. (strain CC9902)).